Here is a 479-residue protein sequence, read N- to C-terminus: Adenylate kinase 8 (479 aa).

Adenylate kinase regions lie at residues 58-258 (PKVV…TYVQ) and 269-471 (PKVL…SGII). 67-72 (ASGKTT) serves as a coordination point for ATP. An NMP 1 region spans residues 87–113 (TKESLLEREFSRLSVEAKSYYQVYKKI). AMP is bound by residues 140–143 (GIPE), Gln147, and Arg203. The tract at residues 177–206 (GKRIDPVTGEIYHTTFDWPPEPEIQNRLRQ) is LID 1. 278-283 (GSGKRL) is an ATP binding site. Positions 298–327 (SCGQLLKEAVAAKSSFGELIQPFFEKRMTV) are NMP 2. Residues 325–327 (MTV), 354–357 (GFPR), and Gln361 contribute to the AMP site. An LID 2 region spans residues 391–424 (LRRTDPVTGERFHLMYKPPPTIEVQVRLLQNPKD). Position 392 (Arg392) interacts with ATP.

It belongs to the adenylate kinase family. Interacts with CFAP45 and CFAP52; CFAP45 and AK8 dimerization may create a cavity at the interface of the dimer that can accommodate AMP.

It is found in the cytoplasm. The protein resides in the cytosol. The protein localises to the cytoskeleton. Its subcellular location is the cilium axoneme. It carries out the reaction AMP + ATP = 2 ADP. It catalyses the reaction a 2'-deoxyribonucleoside 5'-diphosphate + ATP = a 2'-deoxyribonucleoside 5'-triphosphate + ADP. The enzyme catalyses a ribonucleoside 5'-diphosphate + ATP = a ribonucleoside 5'-triphosphate + ADP. Its function is as follows. Nucleoside monophosphate (NMP) kinase that catalyzes the reversible transfer of the terminal phosphate group between nucleoside triphosphates and monophosphates. Has highest activity toward AMP, and weaker activity toward dAMP, CMP and dCMP. Also displays broad nucleoside diphosphate kinase activity. In Mus musculus (Mouse), this protein is Adenylate kinase 8 (Ak8).